A 273-amino-acid chain; its full sequence is Outer surface protein A (273 aa).

The signal sequence occupies residues 1 to 16 (MKKYLLGIGLILALIA). Cys17 is lipidated: N-palmitoyl cysteine. A lipid anchor (S-diacylglycerol cysteine) is attached at Cys17.

This sequence belongs to the OspA lipoprotein family.

The protein localises to the cell outer membrane. The protein resides in the cell surface. In Borreliella burgdorferi (Lyme disease spirochete), this protein is Outer surface protein A.